The following is a 468-amino-acid chain: MEPQPGGARSCRRGAPGGACELGPAAEAAPMSLAIHSTTGTRYDLAVPPDETVEGLRKRLSQRLKVPKERLALLHKDTRLSSGKLQEFGVGDGSKLTLVPTVEAGLMSQASRPEQSVMQALESLTETQVSDFLSGRSPLTLALRVGDHMMFVQLQLAAQHAPLQHRHVLAAAAAAAAARGDPSIASPVSSPCRPVSSAARVPPVPTSPSPASPSPITAGSFRSHAASTTCPEQMDCSPTASSSASPGASTTSTPGASPAPRSRKPGAVIESFVNHAPGVFSGTFSGTLHPNCQDSSGRPRRDIGTILQILNDLLSATRHYQGMPPSLAQLRCHAQCSPASPAPDLAPRTTSCEKLTAAPSASLLQGQSQIRMCKPPGDRLRQTENRATRCKVERLQLLLQQKRLRRKARRDARGPYHWSPSRKAGRSDSSSSGGGGSPSEASGLGLDFEDSVWKPEVNPDIKSEFVVA.

A Ubiquitin-like domain is found at Met-31–Gly-105. 2 disordered regions span residues Pro-182–Lys-264 and Leu-404–Asp-447. Residues Ala-185 to Val-201 are compositionally biased toward low complexity. The segment covering Pro-202 to Pro-213 has biased composition (pro residues). 2 stretches are compositionally biased toward low complexity: residues Ser-237–Pro-260 and Ser-419–Ser-431.

As to quaternary structure, interacts with GCK; the interaction occurs preferentially at low glucose levels. Interacts with the proteasome.

The protein localises to the nucleus. Its subcellular location is the nucleolus. It localises to the cytoplasm. The protein resides in the cytosol. In terms of biological role, facilitates the ubiquitin-independent proteasomal degradation of stimulus-induced transcription factors such as FOSB, EGR1, NR4A1, and IRF4 to the proteasome for degradation. Promotes also the degradation of other substrates such as CBX4. Plays a role in inhibiting the activity of glucokinase GCK and both glucose-induced and basal insulin secretion. This is Midnolin (MIDN) from Homo sapiens (Human).